Reading from the N-terminus, the 138-residue chain is ATP synthase epsilon chain (138 aa).

Belongs to the ATPase epsilon chain family. F-type ATPases have 2 components, CF(1) - the catalytic core - and CF(0) - the membrane proton channel. CF(1) has five subunits: alpha(3), beta(3), gamma(1), delta(1), epsilon(1). CF(0) has three main subunits: a, b and c.

Its subcellular location is the cell inner membrane. Functionally, produces ATP from ADP in the presence of a proton gradient across the membrane. The sequence is that of ATP synthase epsilon chain from Delftia acidovorans (strain DSM 14801 / SPH-1).